A 92-amino-acid chain; its full sequence is Non-specific lipid-transfer protein 1 (92 aa).

4 disulfides stabilise this stretch: cysteine 4–cysteine 52, cysteine 14–cysteine 28, cysteine 29–cysteine 74, and cysteine 50–cysteine 88.

The protein belongs to the plant LTP family. In terms of tissue distribution, expressed in seeds and, at very low levels, in pulp of fruit (at protein level).

Its function is as follows. Plant non-specific lipid-transfer proteins transfer phospholipids as well as galactolipids across membranes. May play a role in wax or cutin deposition in the cell walls of expanding epidermal cells and certain secretory tissues. The sequence is that of Non-specific lipid-transfer protein 1 from Actinidia deliciosa (Kiwi).